The sequence spans 292 residues: tRNA dimethylallyltransferase (292 aa).

Residue 5 to 12 coordinates ATP; sequence APTGAGKT. 7-12 is a binding site for substrate; the sequence is TGAGKT. Residues 29-32 form an interaction with substrate tRNA region; that stretch reads DSRQ.

It belongs to the IPP transferase family. Monomer. The cofactor is Mg(2+).

The catalysed reaction is adenosine(37) in tRNA + dimethylallyl diphosphate = N(6)-dimethylallyladenosine(37) in tRNA + diphosphate. Catalyzes the transfer of a dimethylallyl group onto the adenine at position 37 in tRNAs that read codons beginning with uridine, leading to the formation of N6-(dimethylallyl)adenosine (i(6)A). The protein is tRNA dimethylallyltransferase of Leptospira borgpetersenii serovar Hardjo-bovis (strain JB197).